The primary structure comprises 526 residues: Peptide chain release factor 3 (526 aa).

The tr-type G domain occupies 9–277; it reads DKRRTFAIIS…GIVEWAPRPQ (269 aa). Residues 18–25, 86–90, and 140–143 contribute to the GTP site; these read SHPDAGKT, DTPGH, and NKLD.

It belongs to the TRAFAC class translation factor GTPase superfamily. Classic translation factor GTPase family. PrfC subfamily.

It is found in the cytoplasm. In terms of biological role, increases the formation of ribosomal termination complexes and stimulates activities of RF-1 and RF-2. It binds guanine nucleotides and has strong preference for UGA stop codons. It may interact directly with the ribosome. The stimulation of RF-1 and RF-2 is significantly reduced by GTP and GDP, but not by GMP. This Shewanella loihica (strain ATCC BAA-1088 / PV-4) protein is Peptide chain release factor 3.